A 314-amino-acid polypeptide reads, in one-letter code: MSQALRIVFAGTPEFAAEHLKALLDTPHRIVAVYTQPDRPAGRGQKLMPSAVKSLALEHGLPVMQPQSLRNAEAQAELAALRADLMVVVAYGLILPQAVLDIPRLGCINSHASLLPRWRGAAPIQRAVEAGDAESGVTVMQMEAGLDTGPMLLKVSTPISAADTGGSLHDRLAALGPKAVVEAIAGLAAGTLHGEDQDDALATYAHKLNKDEARLDWSRPAVELERQVRAFTPWPVCHTSLADAPLKVLGASLGQGSGAPGTILEASRDGLLVACGEGALRLTRLQVPGGKPLAFADLYNSRREQFATGQVLGQ.

A (6S)-5,6,7,8-tetrahydrofolate-binding site is contributed by 113–116; sequence SLLP.

The protein belongs to the Fmt family.

The enzyme catalyses L-methionyl-tRNA(fMet) + (6R)-10-formyltetrahydrofolate = N-formyl-L-methionyl-tRNA(fMet) + (6S)-5,6,7,8-tetrahydrofolate + H(+). In terms of biological role, attaches a formyl group to the free amino group of methionyl-tRNA(fMet). The formyl group appears to play a dual role in the initiator identity of N-formylmethionyl-tRNA by promoting its recognition by IF2 and preventing the misappropriation of this tRNA by the elongation apparatus. This chain is Methionyl-tRNA formyltransferase, found in Pseudomonas aeruginosa (strain UCBPP-PA14).